A 414-amino-acid polypeptide reads, in one-letter code: Sex comb on midleg-like protein 4 (414 aa).

Phosphoserine occurs at positions 55 and 65. Residues 257-276 (HRGSLHPSSSLYCKRQNSGD) are compositionally biased toward polar residues. The tract at residues 257–343 (HRGSLHPSSS…DARRPRSRNP (87 aa)) is disordered. A compositionally biased stretch (low complexity) spans 284 to 304 (AATAGGPRTSPMSSGGPSAPG). The SAM domain maps to 288–354 (GGPRTSPMSS…AWTVEDVVWF (67 aa)). The segment covering 312–332 (PKRNTTSLEGNRCASSPSQDA) has biased composition (polar residues).

This sequence belongs to the SCM family.

The protein localises to the nucleus. Functionally, putative Polycomb group (PcG) protein. PcG proteins act by forming multiprotein complexes, which are required to maintain the transcriptionally repressive state of homeotic genes throughout development. The chain is Sex comb on midleg-like protein 4 (SCML4) from Homo sapiens (Human).